The chain runs to 150 residues: Nucleoside diphosphate kinase (150 aa).

Lys9, Phe57, Arg85, Thr91, Arg102, and Asn112 together coordinate ATP. His115 acts as the Pros-phosphohistidine intermediate in catalysis.

It belongs to the NDK family. Homotetramer. The cofactor is Mg(2+).

It localises to the cytoplasm. The enzyme catalyses a 2'-deoxyribonucleoside 5'-diphosphate + ATP = a 2'-deoxyribonucleoside 5'-triphosphate + ADP. It catalyses the reaction a ribonucleoside 5'-diphosphate + ATP = a ribonucleoside 5'-triphosphate + ADP. Major role in the synthesis of nucleoside triphosphates other than ATP. The ATP gamma phosphate is transferred to the NDP beta phosphate via a ping-pong mechanism, using a phosphorylated active-site intermediate. This Staphylococcus carnosus (strain TM300) protein is Nucleoside diphosphate kinase.